Reading from the N-terminus, the 358-residue chain is Probable ABC transporter periplasmic-binding protein y4fP (358 aa).

An N-terminal signal peptide occupies residues 1-46 (MRNVIKLTWSRRKRSASLDKGENIMKLAFAFATAAIVVAAAFPALA).

The protein belongs to the bacterial solute-binding protein 1 family.

The protein resides in the periplasm. Probably part of the binding-protein-dependent transport system y4fNOP. This chain is Probable ABC transporter periplasmic-binding protein y4fP, found in Sinorhizobium fredii (strain NBRC 101917 / NGR234).